The sequence spans 163 residues: Phosphopantetheine adenylyltransferase (163 aa).

Residue Ser9 coordinates substrate. ATP-binding positions include Ser9–Phe10 and His17. Substrate contacts are provided by Lys41, Leu73, and Lys87. Residues Gly88–Arg90, Glu98, and Tyr124–Thr130 each bind ATP.

Belongs to the bacterial CoaD family. Homohexamer. Mg(2+) serves as cofactor.

It is found in the cytoplasm. The enzyme catalyses (R)-4'-phosphopantetheine + ATP + H(+) = 3'-dephospho-CoA + diphosphate. It functions in the pathway cofactor biosynthesis; coenzyme A biosynthesis; CoA from (R)-pantothenate: step 4/5. Functionally, reversibly transfers an adenylyl group from ATP to 4'-phosphopantetheine, yielding dephospho-CoA (dPCoA) and pyrophosphate. The sequence is that of Phosphopantetheine adenylyltransferase from Fusobacterium nucleatum subsp. nucleatum (strain ATCC 25586 / DSM 15643 / BCRC 10681 / CIP 101130 / JCM 8532 / KCTC 2640 / LMG 13131 / VPI 4355).